The sequence spans 316 residues: Ribosomal RNA small subunit methyltransferase H (316 aa).

S-adenosyl-L-methionine contacts are provided by residues 35–37 (AGH), D55, F84, D105, and Q112.

This sequence belongs to the methyltransferase superfamily. RsmH family.

Its subcellular location is the cytoplasm. The enzyme catalyses cytidine(1402) in 16S rRNA + S-adenosyl-L-methionine = N(4)-methylcytidine(1402) in 16S rRNA + S-adenosyl-L-homocysteine + H(+). In terms of biological role, specifically methylates the N4 position of cytidine in position 1402 (C1402) of 16S rRNA. This chain is Ribosomal RNA small subunit methyltransferase H, found in Streptococcus suis (strain 05ZYH33).